A 233-amino-acid chain; its full sequence is Ras-related protein RabV (233 aa).

GTP is bound at residue 15 to 22; sequence GEKEVGKS. Residues 37 to 45 carry the Effector region motif; the sequence is YIPTIGIDF. GTP contacts are provided by residues 63–67 and 122–125; these read DYVSH and TKSD. The segment at 143–182 is disordered; it reads QNNNNNNNNNNNNNNNNNNNNNNNNNNNNNSNNNNNNNLQ. The segment covering 144–180 has biased composition (low complexity); the sequence is NNNNNNNNNNNNNNNNNNNNNNNNNNNNNSNNNNNNN.

This sequence belongs to the small GTPase superfamily. Rab family.

This chain is Ras-related protein RabV (rabV), found in Dictyostelium discoideum (Social amoeba).